The sequence spans 326 residues: Vitamin B12 import system permease protein BtuC (326 aa).

The next 9 helical transmembrane spans lie at tryptophan 15–glutamate 35, leucine 61–phenylalanine 81, proline 88–glycine 108, leucine 112–leucine 132, leucine 146–phenylalanine 166, glycine 184–isoleucine 204, glycine 240–isoleucine 260, valine 274–alanine 294, and glutamate 302–leucine 322.

This sequence belongs to the binding-protein-dependent transport system permease family. FecCD subfamily. The complex is composed of two ATP-binding proteins (BtuD), two transmembrane proteins (BtuC) and a solute-binding protein (BtuF).

Its subcellular location is the cell inner membrane. Part of the ABC transporter complex BtuCDF involved in vitamin B12 import. Involved in the translocation of the substrate across the membrane. The polypeptide is Vitamin B12 import system permease protein BtuC (Escherichia coli O9:H4 (strain HS)).